The following is a 155-amino-acid chain: Large ribosomal subunit protein bL9c (155 aa).

Belongs to the bacterial ribosomal protein bL9 family.

It is found in the plastid. The protein resides in the chloroplast. In terms of biological role, binds to the 23S rRNA. This chain is Large ribosomal subunit protein bL9c, found in Pyropia yezoensis (Susabi-nori).